A 189-amino-acid chain; its full sequence is Ribose 1,5-bisphosphate phosphokinase PhnN (189 aa).

Position 10 to 17 (10 to 17 (GPSGSGKD)) interacts with ATP.

Belongs to the ribose 1,5-bisphosphokinase family.

It carries out the reaction alpha-D-ribose 1,5-bisphosphate + ATP = 5-phospho-alpha-D-ribose 1-diphosphate + ADP. Its pathway is metabolic intermediate biosynthesis; 5-phospho-alpha-D-ribose 1-diphosphate biosynthesis; 5-phospho-alpha-D-ribose 1-diphosphate from D-ribose 5-phosphate (route II): step 3/3. In terms of biological role, catalyzes the phosphorylation of ribose 1,5-bisphosphate to 5-phospho-D-ribosyl alpha-1-diphosphate (PRPP). The polypeptide is Ribose 1,5-bisphosphate phosphokinase PhnN (Enterobacter lignolyticus (strain SCF1)).